A 905-amino-acid chain; its full sequence is Alanine--tRNA ligase (905 aa).

Positions 569, 573, 693, and 697 each coordinate Zn(2+).

This sequence belongs to the class-II aminoacyl-tRNA synthetase family. The cofactor is Zn(2+).

Its subcellular location is the cytoplasm. It catalyses the reaction tRNA(Ala) + L-alanine + ATP = L-alanyl-tRNA(Ala) + AMP + diphosphate. Catalyzes the attachment of alanine to tRNA(Ala) in a two-step reaction: alanine is first activated by ATP to form Ala-AMP and then transferred to the acceptor end of tRNA(Ala). Also edits incorrectly charged Ser-tRNA(Ala) and Gly-tRNA(Ala) via its editing domain. In Roseiflexus sp. (strain RS-1), this protein is Alanine--tRNA ligase.